An 854-amino-acid polypeptide reads, in one-letter code: Protein mono-ADP-ribosyltransferase PARP9 (854 aa).

2 Macro domains span residues 107–296 (LQVF…EFIL) and 306–487 (TPSF…AKRS). The PARP catalytic domain maps to 628–850 (IQQQKTQDEM…QHPWRGFASG (223 aa)).

It belongs to the ARTD/PARP family. In terms of assembly, forms a stable complex with E3 ligase DTX3L; the interaction is required for PARP9 mediated ADP-ribosylation of ubiquitin. Interacts (via PARP catalytic domain) with DTX3L (via N-terminus). Forms a complex with STAT1 and DTX3L independently of IFNB1 or IFNG-mediated STAT1 'Tyr-701' phosphorylation. Forms a complex with STAT1, DTX3L and histone H2B H2BC9/H2BJ; the interaction is likely to induce H2BC9/H2BJ ubiquitination. Interacts (via N-terminus) with STAT1. Interacts with PARP14 in IFNG-stimulated macrophages; the interaction prevents PARP14-mediated STAT1 and STAT6 ADP-riboslylation. Interacts with PARP1 (when poly-ADP-ribosylated). ADP-ribosylated by PARP14. Expressed in lymphocyte-rich tissues, spleen, lymph nodes, peripheral blood lymphocytes and colonic mucosa. Expressed in macrophages. Also expressed in nonhematopoietic tissues such as heart and skeletal muscle. Isoform 2 is the predominant form. Most abundantly expressed in lymphomas with a brisk host inflammatory response. In diffuse large B-cell lymphomas tumors, expressed specifically by malignant B-cells.

Its subcellular location is the cytoplasm. The protein localises to the cytosol. It localises to the nucleus. It carries out the reaction [protein]-C-terminal glycine + NAD(+) = [protein]-C-terminal O-(ADP-D-ribosyl)-glycine + nicotinamide. Its activity is regulated as follows. Binding to poly(ADP-ribose) does not affect its activity. Its function is as follows. ADP-ribosyltransferase which, in association with E3 ligase DTX3L, plays a role in DNA damage repair and in immune responses including interferon-mediated antiviral defenses. Within the complex, enhances DTX3L E3 ligase activity which is further enhanced by PARP9 binding to poly(ADP-ribose). In association with DTX3L and in presence of E1 and E2 enzymes, mediates NAD(+)-dependent mono-ADP-ribosylation of ubiquitin which prevents ubiquitin conjugation to substrates such as histones. During DNA repair, PARP1 recruits PARP9/BAL1-DTX3L complex to DNA damage sites via PARP9 binding to ribosylated PARP1. Subsequent PARP1-dependent PARP9/BAL1-DTX3L-mediated ubiquitination promotes the rapid and specific recruitment of 53BP1/TP53BP1, UIMC1/RAP80, and BRCA1 to DNA damage sites. In response to DNA damage, PARP9-DTX3L complex is required for efficient non-homologous end joining (NHEJ); the complex function is negatively modulated by PARP9 activity. Dispensable for B-cell receptor (BCR) assembly through V(D)J recombination and class switch recombination (CSR). In macrophages, positively regulates pro-inflammatory cytokines production in response to IFNG stimulation by suppressing PARP14-mediated STAT1 ADP-ribosylation and thus promoting STAT1 phosphorylation. Also suppresses PARP14-mediated STAT6 ADP-ribosylation. This is Protein mono-ADP-ribosyltransferase PARP9 (PARP9) from Homo sapiens (Human).